We begin with the raw amino-acid sequence, 79 residues long: Alpha-actitoxin-Ms11a-4 (79 aa).

A signal peptide spans 1–23 (MKVLVAVLVFALLMCMFVDIAES). A propeptide spanning residues 24-46 (RRRDNPEYPSGLRYDEEMGVFKR) is cleaved from the precursor. 3 cysteine pairs are disulfide-bonded: cysteine 47-cysteine 61, cysteine 54-cysteine 67, and cysteine 60-cysteine 76. Residue tyrosine 78 is modified to Tyrosine amide.

Its subcellular location is the secreted. It is found in the nematocyst. In terms of biological role, alpha-toxins act on postsynaptic membranes, they bind to the nicotinic acetylcholine receptors (nAChR) and thus inhibit them. This toxin very weakly competes with alpha-bungarotoxin for binding to orthosteric sites on muscle-type T.carlifornicus (IC(50)=14.95 uM) and human alpha-7/CHRNA7 nAChRs (IC(50)&gt;45 uM). This Metridium senile (Brown sea anemone) protein is Alpha-actitoxin-Ms11a-4.